Consider the following 213-residue polypeptide: Adenylate kinase (213 aa).

ATP is bound at residue 10 to 15 (GAGKGT). The NMP stretch occupies residues 30–59 (STGDIFRANIKNNTELGQKAKTYMDKGELV). AMP-binding positions include T31, R36, 57–59 (ELV), 85–88 (GFPR), and Q92. The LID stretch occupies residues 126 to 163 (GRRACVGCGATYHIQFNPTKVEGICDACGEKLILRDDD). R127 is an ATP binding site. Zn(2+) contacts are provided by C130 and C133. 136–137 (TY) serves as a coordination point for ATP. Zn(2+)-binding residues include C150 and C153. AMP contacts are provided by R160 and R171. Q199 contacts ATP.

This sequence belongs to the adenylate kinase family. As to quaternary structure, monomer.

Its subcellular location is the cytoplasm. The enzyme catalyses AMP + ATP = 2 ADP. Its pathway is purine metabolism; AMP biosynthesis via salvage pathway; AMP from ADP: step 1/1. Functionally, catalyzes the reversible transfer of the terminal phosphate group between ATP and AMP. Plays an important role in cellular energy homeostasis and in adenine nucleotide metabolism. This Lachnospira eligens (strain ATCC 27750 / DSM 3376 / VPI C15-48 / C15-B4) (Eubacterium eligens) protein is Adenylate kinase.